An 855-amino-acid chain; its full sequence is Envelope glycoprotein H (855 aa).

An N-terminal signal peptide occupies residues 1-19 (MSQPYLKIAILVAATIVSA). Residues 20–815 (IPVWTTPVST…ASYSAFKIPS (796 aa)) lie on the Virion surface side of the membrane. Asn-42, Asn-48, Asn-52, Asn-68, Asn-126, Asn-189, and Asn-217 each carry an N-linked (GlcNAc...) asparagine; by host glycan. Positions 174–195 (PVGVVLSPPRTSPDVNNTIRDD) are disordered. The interaction with gL stretch occupies residues 247–310 (DTTQAIAYLG…YAGPIYKVYV (64 aa)). N-linked (GlcNAc...) asparagine; by host glycans are attached at residues Asn-503, Asn-679, Asn-773, and Asn-796. Residues 816–836 (TYLWASIGGLLLAILILYVIV) traverse the membrane as a helical segment. At 837–855 (KMLCGGVINNDYSLLLNSE) the chain is on the intravirion side.

It belongs to the herpesviridae glycoprotein H family. As to quaternary structure, interacts with glycoprotein L (gL); this interaction is necessary for the correct processing and cell surface expression of gH. The heterodimer gH/gL seems to interact with gB trimers during fusion. Post-translationally, N-glycosylated, O-glycosylated, and sialylated.

Its subcellular location is the virion membrane. It is found in the host cell membrane. The protein resides in the host endosome membrane. Its function is as follows. The heterodimer glycoprotein H-glycoprotein L is required for the fusion of viral and plasma membranes leading to virus entry into the host cell. Following initial binding to host receptor, membrane fusion is mediated by the fusion machinery composed of gB and the heterodimer gH/gL. May also be involved in the fusion between the virion envelope and the outer nuclear membrane during virion morphogenesis. In Equine herpesvirus 4 (strain 1942) (EHV-4), this protein is Envelope glycoprotein H.